Reading from the N-terminus, the 332-residue chain is Glycerol-3-phosphate dehydrogenase [NAD(P)+] (332 aa).

NADPH contacts are provided by serine 11, tryptophan 12, arginine 32, arginine 33, and lysine 106. The sn-glycerol 3-phosphate site is built by lysine 106 and glycine 136. Alanine 140 contacts NADPH. Lysine 191, aspartate 244, serine 254, arginine 255, and asparagine 256 together coordinate sn-glycerol 3-phosphate. Catalysis depends on lysine 191, which acts as the Proton acceptor. NADPH is bound at residue arginine 255. The NADPH site is built by valine 280 and glutamate 282.

It belongs to the NAD-dependent glycerol-3-phosphate dehydrogenase family.

It localises to the cytoplasm. The enzyme catalyses sn-glycerol 3-phosphate + NAD(+) = dihydroxyacetone phosphate + NADH + H(+). It carries out the reaction sn-glycerol 3-phosphate + NADP(+) = dihydroxyacetone phosphate + NADPH + H(+). It functions in the pathway membrane lipid metabolism; glycerophospholipid metabolism. In terms of biological role, catalyzes the reduction of the glycolytic intermediate dihydroxyacetone phosphate (DHAP) to sn-glycerol 3-phosphate (G3P), the key precursor for phospholipid synthesis. The chain is Glycerol-3-phosphate dehydrogenase [NAD(P)+] from Corynebacterium urealyticum (strain ATCC 43042 / DSM 7109).